Consider the following 348-residue polypeptide: Probable dual-specificity RNA methyltransferase RlmN (348 aa).

Residue glutamate 92 is the Proton acceptor of the active site. The Radical SAM core domain maps to 98–331; that stretch reads HPDRVTACIS…NEIRREKGTD (234 aa). Cysteines 105 and 336 form a disulfide. Residues cysteine 112, cysteine 116, and cysteine 119 each coordinate [4Fe-4S] cluster. S-adenosyl-L-methionine is bound by residues 159 to 160, serine 191, 214 to 216, and asparagine 290; these read GE and SLH. Cysteine 336 serves as the catalytic S-methylcysteine intermediate.

It belongs to the radical SAM superfamily. RlmN family. It depends on [4Fe-4S] cluster as a cofactor.

Its subcellular location is the cytoplasm. It carries out the reaction adenosine(2503) in 23S rRNA + 2 reduced [2Fe-2S]-[ferredoxin] + 2 S-adenosyl-L-methionine = 2-methyladenosine(2503) in 23S rRNA + 5'-deoxyadenosine + L-methionine + 2 oxidized [2Fe-2S]-[ferredoxin] + S-adenosyl-L-homocysteine. It catalyses the reaction adenosine(37) in tRNA + 2 reduced [2Fe-2S]-[ferredoxin] + 2 S-adenosyl-L-methionine = 2-methyladenosine(37) in tRNA + 5'-deoxyadenosine + L-methionine + 2 oxidized [2Fe-2S]-[ferredoxin] + S-adenosyl-L-homocysteine. Functionally, specifically methylates position 2 of adenine 2503 in 23S rRNA and position 2 of adenine 37 in tRNAs. The sequence is that of Probable dual-specificity RNA methyltransferase RlmN from Fervidobacterium nodosum (strain ATCC 35602 / DSM 5306 / Rt17-B1).